The following is a 139-amino-acid chain: Large ribosomal subunit protein uL16 (139 aa).

Residues 1-19 show a composition bias toward basic residues; sequence MLIPRRVKHRKQHHPKRSG. Residues 1–25 are disordered; sequence MLIPRRVKHRKQHHPKRSGMSKGGT.

Belongs to the universal ribosomal protein uL16 family. As to quaternary structure, part of the 50S ribosomal subunit.

Functionally, binds 23S rRNA and is also seen to make contacts with the A and possibly P site tRNAs. This chain is Large ribosomal subunit protein uL16, found in Streptomyces griseus subsp. griseus (strain JCM 4626 / CBS 651.72 / NBRC 13350 / KCC S-0626 / ISP 5235).